A 536-amino-acid polypeptide reads, in one-letter code: Membrane protein insertase YidC (536 aa).

5 helical membrane passes run 7–27 (LLVMGLLLVSFLIFTQWQQDF), 332–352 (FWLLIFIHSIIGNWGLAIMGV), 411–431 (MGGCLPLILQMPIFIALYWTF), 449–469 (LSAQDPYYIFPVLMGLSMFLL), and 488–508 (FMPVIFTVFFLWFPSGLVLYW).

The protein belongs to the OXA1/ALB3/YidC family. Type 1 subfamily. In terms of assembly, interacts with the Sec translocase complex via SecD. Specifically interacts with transmembrane segments of nascent integral membrane proteins during membrane integration.

It localises to the cell inner membrane. In terms of biological role, required for the insertion and/or proper folding and/or complex formation of integral membrane proteins into the membrane. Involved in integration of membrane proteins that insert both dependently and independently of the Sec translocase complex, as well as at least some lipoproteins. Aids folding of multispanning membrane proteins. The chain is Membrane protein insertase YidC from Haemophilus ducreyi (strain 35000HP / ATCC 700724).